A 272-amino-acid chain; its full sequence is Soluble interferon gamma receptor OPG193 (272 aa).

Positions 1–13 are cleaved as a signal peptide; that stretch reads MRYIIILAVLFIN. N-linked (GlcNAc...) asparagine; by host glycans are attached at residues Asn42, Asn150, and Asn267.

This sequence belongs to the type II cytokine receptor family. As to quaternary structure, homodimer. Interacts with host IFNG.

The protein localises to the secreted. Its function is as follows. Counteracts the antiviral effects of host IFN-gamma. Acts as a soluble IFN-gamma receptor and thus inhibits the interaction between host IFN-gamma and its receptor. The protein is Soluble interferon gamma receptor OPG193 (OPG193) of Bos taurus (Bovine).